A 124-amino-acid polypeptide reads, in one-letter code: Small ribosomal subunit protein eS6 (124 aa).

This sequence belongs to the eukaryotic ribosomal protein eS6 family.

This chain is Small ribosomal subunit protein eS6, found in Methanococcus maripaludis (strain C5 / ATCC BAA-1333).